Reading from the N-terminus, the 260-residue chain is MSGVKDKMLVGERFRRALCSYPESAVVQEAMARELVSMVRLHAGEERLGRVLEIGAGSGLLTELLLEAFPVASLTANDLVGECREPLREIARRLRIAEFSFLKGDIEECGELPGSQDLVVSNATLQWLNDLDKLFAAVRRSLVPGKLFAFTSFTVGNMEEIAMLGGGGLSYRTTEEIGEIAGRHFELLELKESREQLTFSSPREVLGHIRQTGVNGLGGERWSRSRYLDFMENYSRLFRVQGGVSLTYRPLYCVLRRREL.

The protein belongs to the methyltransferase superfamily.

The catalysed reaction is malonyl-[ACP] + S-adenosyl-L-methionine = malonyl-[ACP] methyl ester + S-adenosyl-L-homocysteine. Its pathway is cofactor biosynthesis; biotin biosynthesis. Functionally, converts the free carboxyl group of a malonyl-thioester to its methyl ester by transfer of a methyl group from S-adenosyl-L-methionine (SAM). It allows to synthesize pimeloyl-ACP via the fatty acid synthetic pathway. The protein is Malonyl-[acyl-carrier protein] O-methyltransferase of Chlorobium phaeovibrioides (strain DSM 265 / 1930) (Prosthecochloris vibrioformis (strain DSM 265)).